The sequence spans 426 residues: Glutamate-1-semialdehyde 2,1-aminomutase (426 aa).

Lys265 carries the N6-(pyridoxal phosphate)lysine modification.

This sequence belongs to the class-III pyridoxal-phosphate-dependent aminotransferase family. HemL subfamily. In terms of assembly, homodimer. Pyridoxal 5'-phosphate serves as cofactor.

It localises to the cytoplasm. The catalysed reaction is (S)-4-amino-5-oxopentanoate = 5-aminolevulinate. It participates in porphyrin-containing compound metabolism; protoporphyrin-IX biosynthesis; 5-aminolevulinate from L-glutamyl-tRNA(Glu): step 2/2. The sequence is that of Glutamate-1-semialdehyde 2,1-aminomutase from Hahella chejuensis (strain KCTC 2396).